Consider the following 26-residue polypeptide: Omega-conotoxin TVIA (26 aa).

Disulfide bonds link Cys1–Cys16, Cys8–Cys19, and Cys15–Cys26. 3 positions are modified to 4-hydroxyproline: Pro4, Pro10, and Pro21.

The protein belongs to the conotoxin O1 superfamily. In terms of tissue distribution, expressed by the venom duct.

Its subcellular location is the secreted. In terms of biological role, omega-conotoxins act at presynaptic membranes, they bind and block voltage-gated calcium channels (Cav). The protein is Omega-conotoxin TVIA of Conus tulipa (Fish-hunting cone snail).